A 203-amino-acid polypeptide reads, in one-letter code: Thymidylate kinase (203 aa).

ATP is bound at residue 14-21 (GGEGIGKS).

Belongs to the thymidylate kinase family.

It carries out the reaction dTMP + ATP = dTDP + ADP. Phosphorylation of dTMP to form dTDP in both de novo and salvage pathways of dTTP synthesis. The polypeptide is Thymidylate kinase (Rickettsia peacockii (strain Rustic)).